We begin with the raw amino-acid sequence, 276 residues long: Protein PXR1 (276 aa).

Positions methionine 1 to asparagine 23 are disordered. The region spanning threonine 25–histidine 71 is the G-patch domain. Positions aspartate 152–lysine 172 are enriched in basic and acidic residues. The segment at aspartate 152 to serine 261 is disordered. Residues threonine 173–lysine 218 show a composition bias toward basic residues. The segment covering aspartate 219–serine 228 has biased composition (basic and acidic residues). A compositionally biased stretch (polar residues) spans aspartate 229 to alanine 239.

It belongs to the PINX1 family.

The protein localises to the nucleus. Its subcellular location is the nucleolus. Involved in rRNA-processing at A0, A1 and A2 sites and negatively regulates telomerase. The sequence is that of Protein PXR1 (PXR1) from Candida albicans (strain SC5314 / ATCC MYA-2876) (Yeast).